The chain runs to 100 residues: uncharacterized protein (100 aa).

3 consecutive transmembrane segments (helical) span residues 11 to 33, 45 to 64, and 68 to 90; these read VWSILFVTGIVTACLFAGVSVLM, WMLAGLIVLGVFAIWYSLVY, and WEGAALGMLGFNVIFGAIAGYLI.

Its subcellular location is the cell membrane. This is an uncharacterized protein from Bacillus subtilis (strain 168).